A 687-amino-acid chain; its full sequence is Glycine--tRNA ligase beta subunit (687 aa).

The protein belongs to the class-II aminoacyl-tRNA synthetase family. As to quaternary structure, tetramer of two alpha and two beta subunits.

It is found in the cytoplasm. It catalyses the reaction tRNA(Gly) + glycine + ATP = glycyl-tRNA(Gly) + AMP + diphosphate. The chain is Glycine--tRNA ligase beta subunit from Lactobacillus acidophilus (strain ATCC 700396 / NCK56 / N2 / NCFM).